Consider the following 130-residue polypeptide: MSAKTDEILESLKTLSLLEASELVKQIEEAFGVSAAASAGAVVMAAPGAAAGGGEAAEEKTEFDVILESFDAAAKIKVLKAVREATGLGLADAKGLVEKAPTPVKEGVAKAAAEDMKKAIEEAGGKVTLK.

Belongs to the bacterial ribosomal protein bL12 family. In terms of assembly, homodimer. Part of the ribosomal stalk of the 50S ribosomal subunit. Forms a multimeric L10(L12)X complex, where L10 forms an elongated spine to which 2 to 4 L12 dimers bind in a sequential fashion. Binds GTP-bound translation factors.

In terms of biological role, forms part of the ribosomal stalk which helps the ribosome interact with GTP-bound translation factors. Is thus essential for accurate translation. This chain is Large ribosomal subunit protein bL12, found in Synechococcus sp. (strain RCC307).